The primary structure comprises 142 residues: Large ribosomal subunit protein uL22c (142 aa).

The protein belongs to the universal ribosomal protein uL22 family. Part of the 50S ribosomal subunit.

It is found in the plastid. The protein localises to the chloroplast. Its function is as follows. This protein binds specifically to 23S rRNA. The globular domain of the protein is located near the polypeptide exit tunnel on the outside of the subunit, while an extended beta-hairpin is found that lines the wall of the exit tunnel in the center of the 70S ribosome. This Pinus thunbergii (Japanese black pine) protein is Large ribosomal subunit protein uL22c (rpl22).